The sequence spans 304 residues: Ribosomal RNA small subunit methyltransferase H (304 aa).

S-adenosyl-L-methionine-binding positions include 36–38, D53, F79, D98, and Q105; that span reads GGH.

Belongs to the methyltransferase superfamily. RsmH family.

The protein resides in the cytoplasm. The enzyme catalyses cytidine(1402) in 16S rRNA + S-adenosyl-L-methionine = N(4)-methylcytidine(1402) in 16S rRNA + S-adenosyl-L-homocysteine + H(+). Specifically methylates the N4 position of cytidine in position 1402 (C1402) of 16S rRNA. The polypeptide is Ribosomal RNA small subunit methyltransferase H (Myxococcus xanthus (strain DK1622)).